Reading from the N-terminus, the 447-residue chain is Adenylosuccinate synthetase (447 aa).

GTP is bound by residues 12 to 18 (GDEGKGK) and 40 to 42 (GHT). The active-site Proton acceptor is the aspartate 13. Aspartate 13 and glycine 40 together coordinate Mg(2+). Residues 13–16 (DEGK), 38–41 (NAGH), threonine 128, arginine 142, glutamine 223, threonine 238, and arginine 302 each bind IMP. Residue histidine 41 is the Proton donor of the active site. 298 to 304 (TTTGRRR) contributes to the substrate binding site. GTP-binding positions include arginine 304, 330–332 (KLD), and 412–414 (SLG).

The protein belongs to the adenylosuccinate synthetase family. Homodimer. Mg(2+) is required as a cofactor.

The protein localises to the cytoplasm. The enzyme catalyses IMP + L-aspartate + GTP = N(6)-(1,2-dicarboxyethyl)-AMP + GDP + phosphate + 2 H(+). Its pathway is purine metabolism; AMP biosynthesis via de novo pathway; AMP from IMP: step 1/2. Functionally, plays an important role in the de novo pathway of purine nucleotide biosynthesis. Catalyzes the first committed step in the biosynthesis of AMP from IMP. The chain is Adenylosuccinate synthetase from Thermosynechococcus vestitus (strain NIES-2133 / IAM M-273 / BP-1).